The primary structure comprises 515 residues: Bifunctional purine biosynthesis protein PurH (515 aa).

Positions 1–145 constitute an MGS-like domain; sequence MTKRVLISVS…KNHASVTVVV (145 aa).

The protein belongs to the PurH family.

The enzyme catalyses (6R)-10-formyltetrahydrofolate + 5-amino-1-(5-phospho-beta-D-ribosyl)imidazole-4-carboxamide = 5-formamido-1-(5-phospho-D-ribosyl)imidazole-4-carboxamide + (6S)-5,6,7,8-tetrahydrofolate. It carries out the reaction IMP + H2O = 5-formamido-1-(5-phospho-D-ribosyl)imidazole-4-carboxamide. It functions in the pathway purine metabolism; IMP biosynthesis via de novo pathway; 5-formamido-1-(5-phospho-D-ribosyl)imidazole-4-carboxamide from 5-amino-1-(5-phospho-D-ribosyl)imidazole-4-carboxamide (10-formyl THF route): step 1/1. It participates in purine metabolism; IMP biosynthesis via de novo pathway; IMP from 5-formamido-1-(5-phospho-D-ribosyl)imidazole-4-carboxamide: step 1/1. This chain is Bifunctional purine biosynthesis protein PurH, found in Streptococcus pneumoniae (strain JJA).